Here is a 216-residue protein sequence, read N- to C-terminus: Probable GTP-binding protein EngB (216 aa).

One can recognise an EngB-type G domain in the interval 37 to 214 (DGLEVAFAGR…RAAMIRLLDE (178 aa)). Residues 45-52 (GRSNVGKS), 72-76 (GRTQE), 92-95 (DMPG), 159-162 (TKAD), and 193-195 (TSS) contribute to the GTP site. Residues serine 52 and threonine 74 each contribute to the Mg(2+) site.

It belongs to the TRAFAC class TrmE-Era-EngA-EngB-Septin-like GTPase superfamily. EngB GTPase family. Mg(2+) is required as a cofactor.

Functionally, necessary for normal cell division and for the maintenance of normal septation. The chain is Probable GTP-binding protein EngB from Rhodopseudomonas palustris (strain HaA2).